Reading from the N-terminus, the 671-residue chain is Zinc finger protein 750 (671 aa).

The CCHC-type zinc finger occupies 25-51 (YKCFQCPFTCNEKSHLFNHMKYGLCKN). The Zn(2+) site is built by cysteine 27, cysteine 30, histidine 43, and cysteine 49. Disordered stretches follow at residues 66 to 87 (PKVN…SPVP), 366 to 433 (ETSP…KDFT), and 592 to 671 (SSPG…PRVS). Polar residues-rich tracts occupy residues 67 to 78 (KVNSTDQKQPSN) and 402 to 412 (SPTNFTQNSQG).

The protein resides in the nucleus. Functionally, transcription factor involved in epidermis differentiation. The chain is Zinc finger protein 750 (znf750) from Xenopus tropicalis (Western clawed frog).